The chain runs to 349 residues: Heparin sulfate O-sulfotransferase (349 aa).

At 1 to 17 the chain is on the cytoplasmic side; that stretch reads MFRKLLKMWILLRPTHW. Residues 18-38 form a helical; Signal-anchor for type II membrane protein membrane-spanning segment; sequence LILIALCAVTCAGYWLLWSEI. The Lumenal portion of the chain corresponds to 39 to 349; it reads RLEHAFKPLS…KFMYEKIRPK (311 aa). N-linked (GlcNAc...) asparagine glycans are attached at residues Asn-107 and Asn-126. Catalysis depends on residues His-139 and His-141. Cystine bridges form between Cys-200–Cys-208 and Cys-221–Cys-227. An N-linked (GlcNAc...) asparagine glycan is attached at Asn-282.

Belongs to the sulfotransferase 3 family. In terms of assembly, homotrimer.

Its subcellular location is the golgi apparatus membrane. Catalyzes the transfer of sulfate to the C2-position of selected hexuronic acid residues within the maturing heparan sulfate (HS). This Drosophila melanogaster (Fruit fly) protein is Heparin sulfate O-sulfotransferase.